Consider the following 79-residue polypeptide: Dolichyl-diphosphooligosaccharide--protein glycosyltransferase subunit TMEM258 (79 aa).

A run of 2 helical transmembrane segments spans residues 17–37 (VFPH…AWFF) and 55–75 (LISL…LLWV).

This sequence belongs to the OST5 family. In terms of assembly, component of the oligosaccharyltransferase (OST) complex.

It is found in the membrane. The protein localises to the endoplasmic reticulum. Its subcellular location is the cytoplasm. The protein operates within protein modification; protein glycosylation. Functionally, subunit of the oligosaccharyl transferase (OST) complex that catalyzes the initial transfer of a defined glycan (Glc(3)Man(9)GlcNAc(2) in eukaryotes) from the lipid carrier dolichol-pyrophosphate to an asparagine residue within an Asn-X-Ser/Thr consensus motif in nascent polypeptide chains, the first step in protein N-glycosylation. N-glycosylation occurs cotranslationally and the complex associates with the Sec61 complex at the channel-forming translocon complex that mediates protein translocation across the endoplasmic reticulum (ER). All subunits are required for a maximal enzyme activity. This chain is Dolichyl-diphosphooligosaccharide--protein glycosyltransferase subunit TMEM258, found in Gallus gallus (Chicken).